A 523-amino-acid chain; its full sequence is Frizzled-4 (523 aa).

The first 22 residues, 1–22 (MGARSLTLLYLLCCLVVGLIAG), serve as a signal peptide directing secretion. The Extracellular segment spans residues 23–198 (FGEEEERSCD…KCGYDSGLYN (176 aa)). The FZ domain maps to 26-147 (EEERSCDPIR…NDHNHMCMEG (122 aa)). 8 disulfides stabilise this stretch: C31-C92, C39-C85, C76-C114, C103-C144, C107-C131, C167-C186, C190-C268, and C288-C363. N45 carries an N-linked (GlcNAc...) asparagine glycan. An N-linked (GlcNAc...) asparagine glycan is attached at N130. A helical membrane pass occupies residues 199-229 (RLSKEFTDIWMAVWASLCFISTAFTVLTFLI). The Cytoplasmic portion of the chain corresponds to 230–235 (DSSRFC). A helical transmembrane segment spans residues 236–261 (YPERPIIFLSMCYNIYSIAYIVRLTV). Residues 262–285 (GRERISCDFEEAAEPVLIQEGLKN) lie on the Extracellular side of the membrane. A helical membrane pass occupies residues 286-319 (TGCAIIFLLMYFFGMASSIWWVILTLTWFLAAGL). Residues 320–322 (KWG) lie on the Cytoplasmic side of the membrane. The helical transmembrane segment at 323–351 (HEAIEMHSSYFHIAAWAIPAVKTIVILIM) threads the bilayer. The Extracellular segment spans residues 352–369 (RLVDADELTGLCYVGNQN). The helical transmembrane segment at 370–396 (IDALTGFVVAPLFTYLVIGTLFIAAGL) threads the bilayer. The Cytoplasmic portion of the chain corresponds to 397 to 417 (VALFKIRSNLQKDGTKTDKLE). The helical transmembrane segment at 418-443 (RLMVKIGVFSVLYTVPATCVIACYFY) threads the bilayer. Topologically, residues 444–459 (EVSNWNVFRYTADDSN) are extracellular. A helical membrane pass occupies residues 460-481 (MAVEMLNIFMSLLVGITSGMWI). The Cytoplasmic segment spans residues 482–523 (WSAKTLHTWQKCTNRLVNSGKVKRKKRVDGWVKPGKGNETVV). Positions 485-490 (KTLHTW) match the Lys-Thr-X-X-X-Trp motif, mediates interaction with the PDZ domain of Dvl family members motif. A PDZ-binding motif is present at residues 521–523 (TVV).

It belongs to the G-protein coupled receptor Fz/Smo family. Interacts (via FZ domain) with tsku; tsku competes with wnt2b for binding to fzd4, inhibiting Wnt signaling and repressing peripheral eye development.

The protein localises to the cell membrane. Receptor for Wnt proteins. Most frizzled receptors are coupled to the beta-catenin canonical signaling pathway, which leads to the activation of disheveled proteins, inhibition of GSK-3 kinase, nuclear accumulation of beta-catenin and activation of Wnt target genes. A second signaling pathway involving PKC and calcium fluxes has been seen for some family members, but it is not yet clear if it represents a distinct pathway or if it can be integrated in the canonical pathway, as PKC seems to be required for Wnt-mediated inactivation of GSK-3 kinase. Both pathways seem to involve interactions with G-proteins. May be involved in transduction and intercellular transmission of polarity information during tissue morphogenesis and/or in differentiated tissues. Activated by Wnt5A. The polypeptide is Frizzled-4 (fzd4) (Xenopus laevis (African clawed frog)).